Here is a 242-residue protein sequence, read N- to C-terminus: Uridylate kinase (242 aa).

16–19 lines the ATP pocket; sequence KVSG. A UMP-binding site is contributed by G58. ATP is bound by residues G59 and R63. UMP-binding positions include D78 and 139–146; that span reads TGNPFCTT. ATP-binding residues include T166, Q167, Y172, and D175.

The protein belongs to the UMP kinase family. As to quaternary structure, homohexamer.

It localises to the cytoplasm. It catalyses the reaction UMP + ATP = UDP + ADP. It participates in pyrimidine metabolism; CTP biosynthesis via de novo pathway; UDP from UMP (UMPK route): step 1/1. Its activity is regulated as follows. Inhibited by UTP. In terms of biological role, catalyzes the reversible phosphorylation of UMP to UDP. The protein is Uridylate kinase of Rickettsia felis (strain ATCC VR-1525 / URRWXCal2) (Rickettsia azadi).